The following is a 735-amino-acid chain: Dolichyl-diphosphooligosaccharide--protein glycosyltransferase subunit STT3B (735 aa).

The Cytoplasmic portion of the chain corresponds to 1–38 (MGGKSEPAKSESMATKPDLLNTSFFSFKSLKLKTKQQE). The chain crosses the membrane as a helical span at residues 39–59 (LLLRISILGLVYILAFIARLF). Residues 60 to 142 (SVLRYESMIH…VHIREVCVLT (83 aa)) are Lumenal-facing. A DXD motif 1 motif is present at residues 70–72 (EFD). D72 contributes to the Mn(2+) binding site. A helical transmembrane segment spans residues 143 to 161 (APFFASNTTLVAYFFGKEL). Topologically, residues 162–163 (WD) are cytoplasmic. Residues 164 to 181 (TGAGLVAAVLIAICPGYI) traverse the membrane as a helical segment. Residues 182–192 (SRSVAGSYDNE) lie on the Lumenal side of the membrane. Residues D190 and E192 each coordinate Mn(2+). Residues 190–192 (DNE) carry the DXD motif 2 motif. A helical transmembrane segment spans residues 193–212 (AVAIFALLLTFYLFVKAVNT). At 213-214 (GS) the chain is on the cytoplasmic side. Residues 215–229 (LAWALASAFGYFYMV) traverse the membrane as a helical segment. Over 230–234 (SAWGG) the chain is Lumenal. The chain crosses the membrane as a helical span at residues 235 to 251 (YVFIINLVPLYVLVLLI). Topologically, residues 252 to 256 (TGRYS) are cytoplasmic. A helical transmembrane segment spans residues 257–282 (MRLYIAYNCMYILGMLLAMQIRFVGF). Residues 283–290 (QHVQSGEH) lie on the Lumenal side of the membrane. Residues 291-310 (MGAMGVFLLMQVFYFLDWVK) traverse the membrane as a helical segment. Residues 311 to 326 (YQLNDTKLFQTFLRIT) lie on the Cytoplasmic side of the membrane. A helical membrane pass occupies residues 327-347 (VTSAILVGGVAVGVGTASGYI). The Lumenal segment spans residues 348–380 (SPWTGRFYSLLDPTYAKDHIPIIASVSEHQPTA). An SVSE motif motif is present at residues 372–375 (SVSE). The helical transmembrane segment at 381–403 (WSSFMFDYHILLFLFPAGLYFCF) threads the bilayer. Topologically, residues 404–409 (KRLTDA) are cytoplasmic. A helical membrane pass occupies residues 410 to 426 (TIFIVMYGLTSLYFAGV). The Lumenal segment spans residues 427–430 (MVRL). R429 contacts dolichyl diphosphooligosaccharide. Residues 431–452 (ILVATPAVCLISAIAVSATIKN) form a helical membrane-spanning segment. At 453 to 494 (LTSLLRTKQKVSQTGSTKGAGSSKASSKVTLDQSQPFQKNGA) the chain is on the cytoplasmic side. A helical transmembrane segment spans residues 495–515 (IALLVGVFYLLSRYAIHCTWV). Topologically, residues 516 to 735 (TAEAYSSPSI…YRVKPPTNRL (220 aa)) are lumenal. The interacts with target acceptor peptide in protein substrate stretch occupies residues 562–564 (WWD). A WWDYG motif motif is present at residues 562–566 (WWDYG). Residue Y567 coordinates dolichyl diphosphooligosaccharide. Residues N574 and N581 are each glycosylated (N-linked (GlcNAc...) asparagine). Residue N585 is glycosylated (N-linked (GlcNAc...) (high mannose) asparagine). The DK motif signature appears at 629–636 (DINKFLWM).

The protein belongs to the STT3 family. In terms of assembly, component of the oligosaccharyltransferase (OST) complex. The cofactor is Mg(2+). Requires Mn(2+) as cofactor. As to expression, expressed preferentially in the root but also in the shoot.

It localises to the endoplasmic reticulum membrane. The enzyme catalyses a di-trans,poly-cis-dolichyl diphosphooligosaccharide + L-asparaginyl-[protein] = N(4)-(oligosaccharide-(1-&gt;4)-N-acetyl-beta-D-glucosaminyl-(1-&gt;4)-N-acetyl-beta-D-glucosaminyl)-L-asparaginyl-[protein] + a di-trans,poly-cis-dolichyl diphosphate + H(+). It participates in protein modification; protein glycosylation. Catalytic subunit of the oligosaccharyl transferase (OST) complex that catalyzes the initial transfer of a defined glycan (Glc(3)Man(9)GlcNAc(2) in eukaryotes) from the lipid carrier dolichol-pyrophosphate to an asparagine residue within an Asn-X-Ser/Thr consensus motif in nascent polypeptide chains, the first step in protein N-glycosylation. N-glycosylation occurs cotranslationally and the complex associates with the Sec61 complex at the channel-forming translocon complex that mediates protein translocation across the endoplasmic reticulum (ER). All subunits are required for a maximal enzyme activity. This subunit contains the active site and the acceptor peptide and donor lipid-linked oligosaccharide (LLO) binding pockets. The polypeptide is Dolichyl-diphosphooligosaccharide--protein glycosyltransferase subunit STT3B (STT3B) (Arabidopsis thaliana (Mouse-ear cress)).